A 498-amino-acid polypeptide reads, in one-letter code: Protein flp (498 aa).

The next 4 membrane-spanning stretches (helical) occupy residues 6-26 (LYFLSISIIIIVAISIAIYIT), 389-409 (FNIVTVLMTTLILLAFIFSAY), 433-453 (LSLCICIALALILYALPYLIL), and 471-491 (LALITTLIALFSTLIVILLFL).

Its subcellular location is the cell membrane. Its precise function is unknown. Has no penicillin-binding activity and is not involved in methicillin resistance. The protein is Protein flp (flp) of Staphylococcus aureus (strain COL).